A 426-amino-acid chain; its full sequence is Glutamate-1-semialdehyde 2,1-aminomutase (426 aa).

Position 263 is an N6-(pyridoxal phosphate)lysine (lysine 263).

Belongs to the class-III pyridoxal-phosphate-dependent aminotransferase family. HemL subfamily. Homodimer. Pyridoxal 5'-phosphate serves as cofactor.

It localises to the cytoplasm. It carries out the reaction (S)-4-amino-5-oxopentanoate = 5-aminolevulinate. The protein operates within porphyrin-containing compound metabolism; protoporphyrin-IX biosynthesis; 5-aminolevulinate from L-glutamyl-tRNA(Glu): step 2/2. In Dichelobacter nodosus (strain VCS1703A), this protein is Glutamate-1-semialdehyde 2,1-aminomutase.